A 223-amino-acid polypeptide reads, in one-letter code: Thiamine-phosphate synthase (223 aa).

4-amino-2-methyl-5-(diphosphooxymethyl)pyrimidine-binding positions include 42-46 and N83; that span reads QLRDK. Residues D84 and D103 each coordinate Mg(2+). Residue S122 coordinates 4-amino-2-methyl-5-(diphosphooxymethyl)pyrimidine. Position 148–150 (148–150) interacts with 2-[(2R,5Z)-2-carboxy-4-methylthiazol-5(2H)-ylidene]ethyl phosphate; it reads TPT. K151 provides a ligand contact to 4-amino-2-methyl-5-(diphosphooxymethyl)pyrimidine. G179 contacts 2-[(2R,5Z)-2-carboxy-4-methylthiazol-5(2H)-ylidene]ethyl phosphate.

It belongs to the thiamine-phosphate synthase family. It depends on Mg(2+) as a cofactor.

It carries out the reaction 2-[(2R,5Z)-2-carboxy-4-methylthiazol-5(2H)-ylidene]ethyl phosphate + 4-amino-2-methyl-5-(diphosphooxymethyl)pyrimidine + 2 H(+) = thiamine phosphate + CO2 + diphosphate. The enzyme catalyses 2-(2-carboxy-4-methylthiazol-5-yl)ethyl phosphate + 4-amino-2-methyl-5-(diphosphooxymethyl)pyrimidine + 2 H(+) = thiamine phosphate + CO2 + diphosphate. It catalyses the reaction 4-methyl-5-(2-phosphooxyethyl)-thiazole + 4-amino-2-methyl-5-(diphosphooxymethyl)pyrimidine + H(+) = thiamine phosphate + diphosphate. The protein operates within cofactor biosynthesis; thiamine diphosphate biosynthesis; thiamine phosphate from 4-amino-2-methyl-5-diphosphomethylpyrimidine and 4-methyl-5-(2-phosphoethyl)-thiazole: step 1/1. Functionally, condenses 4-methyl-5-(beta-hydroxyethyl)thiazole monophosphate (THZ-P) and 2-methyl-4-amino-5-hydroxymethyl pyrimidine pyrophosphate (HMP-PP) to form thiamine monophosphate (TMP). In Mycobacterium avium (strain 104), this protein is Thiamine-phosphate synthase.